The sequence spans 420 residues: Gamma-glutamyl phosphate reductase (420 aa).

The protein belongs to the gamma-glutamyl phosphate reductase family.

It is found in the cytoplasm. The enzyme catalyses L-glutamate 5-semialdehyde + phosphate + NADP(+) = L-glutamyl 5-phosphate + NADPH + H(+). It functions in the pathway amino-acid biosynthesis; L-proline biosynthesis; L-glutamate 5-semialdehyde from L-glutamate: step 2/2. Its function is as follows. Catalyzes the NADPH-dependent reduction of L-glutamate 5-phosphate into L-glutamate 5-semialdehyde and phosphate. The product spontaneously undergoes cyclization to form 1-pyrroline-5-carboxylate. The chain is Gamma-glutamyl phosphate reductase from Shewanella amazonensis (strain ATCC BAA-1098 / SB2B).